The chain runs to 338 residues: MRTDDFDYKLPEELIASYPLENRDASRLLKLNKQTGEILDHKFTDFIDFINPEDLLIFNNSKVMLARLYGEKITGAKLEYLIERVKTPKIFETHIKANRSPAIGSEIYVQDTLAKILEKDGGMYLLELQGNKDIYQLMEEFGHIPLPPYMKRDDEEFDAERYQTVYAKDLGSVAAPTAGLHFSEELMQQIKAKGTDIAYITLHVGSGTFKPVQVDDVNNHKMHSEVISVSEDVCEKIRQTKANGGRVIAIGTTSVRSLETAGQSGEIQPYQGETDIFLYPGKKFNIVDAMITNFHLPKSTLIMLVSAFADKEKIMKAYEHAIAEKYRFFSYGDAMFIF.

Belongs to the QueA family. Monomer.

It is found in the cytoplasm. The catalysed reaction is 7-aminomethyl-7-carbaguanosine(34) in tRNA + S-adenosyl-L-methionine = epoxyqueuosine(34) in tRNA + adenine + L-methionine + 2 H(+). It participates in tRNA modification; tRNA-queuosine biosynthesis. Transfers and isomerizes the ribose moiety from AdoMet to the 7-aminomethyl group of 7-deazaguanine (preQ1-tRNA) to give epoxyqueuosine (oQ-tRNA). This is S-adenosylmethionine:tRNA ribosyltransferase-isomerase from Francisella philomiragia subsp. philomiragia (strain ATCC 25017 / CCUG 19701 / FSC 153 / O#319-036).